The sequence spans 593 residues: Mitochondrial sodium/calcium exchanger protein (593 aa).

An N-terminal signal peptide occupies residues 1-20 (MGPLWALRVAGALSVAGVLA). Topologically, residues 21-93 (GHDGSQRAGQ…GAFCTFPSSL (73 aa)) are extracellular. Asn-58 carries N-linked (GlcNAc...) asparagine glycosylation. Residues 94–114 (LPLSVSLYALWLLYLFVILGV) form a helical membrane-spanning segment. The Cytoplasmic segment spans residues 115-135 (TAEKFFCPNLSAISTNLKLSH). A helical membrane pass occupies residues 136–158 (NGLGVVGHSLTPALHGVTFLAFG). Topologically, residues 159-178 (NGAPDIFSAVVAFSDPRTAG) are extracellular. A helical membrane pass occupies residues 179 to 199 (LAVGAIFGAGIFVTTVVAGGI). The Cytoplasmic segment spans residues 200–215 (ALVKPFAAASRPFLRD). Residues 216–236 (VIFYMVAVFLTFLVLYFGYIT) form a helical membrane-spanning segment. Residues 237 to 239 (LGE) lie on the Extracellular side of the membrane. Residues 240 to 260 (ALGYLGLYVFYVFTVVLCTWI) form a helical membrane-spanning segment. The Cytoplasmic segment spans residues 261-334 (HRWQRGDGPP…KWRRKPWYWR (74 aa)). Residues 268–277 (GPPPPGPWEP) show a composition bias toward pro residues. The tract at residues 268–291 (GPPPPGPWEPAIPTDAEEQESSGT) is disordered. The chain crosses the membrane as a helical span at residues 335 to 355 (LFKVLKVPVELVLLLTVPVVD). Topologically, residues 356–369 (PDKDDLNWKRPLNC) are extracellular. The helical transmembrane segment at 370-390 (LHIVTGPLLCIFTLKSGAYGL) threads the bilayer. The Cytoplasmic segment spans residues 391–395 (YQIQG). A helical membrane pass occupies residues 396–416 (VFPVWALVALAGSVLAIIVFV). Residues 417 to 428 (TTHNEEPPKYHC) lie on the Extracellular side of the membrane. A helical transmembrane segment spans residues 429–449 (VFAFLGFLSSAMWINAAATEL). The Cytoplasmic segment spans residues 450 to 454 (VNILR). The helical transmembrane segment at 455–475 (TLGIIFELSNTVLGLTLLAWG) threads the bilayer. Topologically, residues 476–496 (NSIGDTFSDLTMARQGYPRMA) are extracellular. A helical membrane pass occupies residues 497–517 (FSACFGGIIFNILVGVGLGCL). Topologically, residues 518–533 (LQMTNSQMVVKLEPDS) are cytoplasmic. A helical transmembrane segment spans residues 534–554 (LLVWILAGALGLSLVFSFVAV). The Extracellular portion of the chain corresponds to 555–564 (PAQCFQLGKA). Residues 565–585 (YGTCLILYYLVFLCVALLTEF) traverse the membrane as a helical segment. At 586 to 593 (RVIHLAAT) the chain is on the cytoplasmic side.

Belongs to the Ca(2+):cation antiporter (CaCA) (TC 2.A.19) family. SLC24A subfamily.

The protein resides in the mitochondrion inner membrane. The catalysed reaction is Ca(2+)(in) + 3 Na(+)(out) = Ca(2+)(out) + 3 Na(+)(in). In terms of biological role, mitochondrial sodium/calcium antiporter that mediates sodium-dependent calcium efflux from mitochondrion, by mediating the exchange of 3 sodium ions per 1 calcium ion. Plays a central role in mitochondrial calcium homeostasis by mediating mitochondrial calcium extrusion: calcium efflux is essential for mitochondrial function and cell survival, notably in cardiomyocytes. Involved in B-lymphocyte chemotaxis. This is Mitochondrial sodium/calcium exchanger protein from Gallus gallus (Chicken).